The chain runs to 1518 residues: Putative cellulose synthase 3 (1518 aa).

Residues 1-731 are catalytic; the sequence is MYGTWFTTGK…EEKLEKQSFV (731 aa). A run of 3 helical transmembrane segments spans residues 24–44, 71–91, and 105–125; these read PVWV…SVRI, ITVF…VWRL, and LAVL…LSYF. The tract at residues 144–237 is catalytic subdomain A; it reads QWPSVDVFVP…FAVIFDCDHV (94 aa). Active-site residues include D186 and D330. Residues 314-374 form a catalytic subdomain B region; sequence EAVMGIGGFA…GQRVRWARGM (61 aa). Transmembrane regions (helical) follow at residues 404–424, 428–448, 465–485, 514–534, and 543–563; these read FLFA…LFLG, IAAS…HSVI, IYET…LLQP, ILAG…VWQF, and FILN…SIAV. The PilZ domain occupies 569–668; it reads QTRNAPRVSV…ERQVVSMVFG (100 aa). The cyclic di-GMP binding domain stretch occupies residues 732 to 1518; it reads LKPVPRSARH…IARDDLTGEL (787 aa). The segment at 765–785 is disordered; that stretch reads APSPDQSGVTAETPFGDSNTG. The span at 768–785 shows a compositional bias: polar residues; that stretch reads PDQSGVTAETPFGDSNTG. A helical transmembrane segment spans residues 1481–1501; sequence ALYLAGLAGAGLAALGVWAWL.

It in the N-terminal section; belongs to the glycosyltransferase 2 family. The protein in the C-terminal section; belongs to the AcsB/BcsB family.

It localises to the cell inner membrane. The catalysed reaction is [(1-&gt;4)-beta-D-glucosyl](n) + UDP-alpha-D-glucose = [(1-&gt;4)-beta-D-glucosyl](n+1) + UDP + H(+). The protein operates within glycan metabolism; bacterial cellulose biosynthesis. This chain is Putative cellulose synthase 3 (bcsABII-B), found in Komagataeibacter xylinus (Gluconacetobacter xylinus).